Reading from the N-terminus, the 397-residue chain is Dual oxidase maturation factor 1 (397 aa).

2 helical membrane passes run 26 to 46 (FVIFSVFLIPLIAYILILPGV) and 57 to 77 (YVLMLAVGGALIASLIYPCWA). The N-linked (GlcNAc...) asparagine glycan is linked to Asn109. 3 helical membrane-spanning segments follow: residues 191 to 211 (AAIWFAFACWCLSVVLMLFLP), 218 to 238 (ILATGISCLIACLVYLLLSPC), and 261 to 281 (CFYLIFAIGILCVLCGLGLGI). The segment at 324-376 (YGTNTTNSSRDKNDISSDKTAGSSGFQSRTSTCQSSASSASLRSQSSIETVHD) is disordered. Residues Asn327 and Asn330 are each glycosylated (N-linked (GlcNAc...) asparagine). Over residues 341-350 (DKTAGSSGFQ) the composition is skewed to polar residues. Low complexity predominate over residues 351–370 (SRTSTCQSSASSASLRSQSS).

Belongs to the DUOXA family. Interacts with bli-3 and tsp-15. Interacts with csnk-1. As to expression, expressed in the hypodermis, specifically in seam cells, the terminal bulb of the pharynx, the distal region of the gonadal arm, vulva, spermatheca and uterus.

The protein resides in the membrane. Functionally, plays a role in cuticle biogenesis. In complex with tsp-15 and the dual oxidase bli-3, promotes the generation of reactive oxygen species (ROS) and tyrosine cross-linking of collagen, thus stabilizing cuticular extracellular matrix. In Caenorhabditis elegans, this protein is Dual oxidase maturation factor 1.